A 346-amino-acid polypeptide reads, in one-letter code: tRNA N6-adenosine threonylcarbamoyltransferase (346 aa).

Histidine 111 and histidine 115 together coordinate Fe cation. Substrate contacts are provided by residues 134 to 138 (LVSGG), aspartate 167, glycine 180, and asparagine 279. Aspartate 307 contributes to the Fe cation binding site.

The protein belongs to the KAE1 / TsaD family. Fe(2+) is required as a cofactor.

The protein localises to the cytoplasm. The enzyme catalyses L-threonylcarbamoyladenylate + adenosine(37) in tRNA = N(6)-L-threonylcarbamoyladenosine(37) in tRNA + AMP + H(+). Its function is as follows. Required for the formation of a threonylcarbamoyl group on adenosine at position 37 (t(6)A37) in tRNAs that read codons beginning with adenine. Is involved in the transfer of the threonylcarbamoyl moiety of threonylcarbamoyl-AMP (TC-AMP) to the N6 group of A37, together with TsaE and TsaB. TsaD likely plays a direct catalytic role in this reaction. The chain is tRNA N6-adenosine threonylcarbamoyltransferase from Burkholderia multivorans (strain ATCC 17616 / 249).